A 464-amino-acid polypeptide reads, in one-letter code: UDP-N-acetylmuramate--L-alanine ligase (464 aa).

Residue 111–117 coordinates ATP; sequence GAHGKTT.

Belongs to the MurCDEF family.

It localises to the cytoplasm. It carries out the reaction UDP-N-acetyl-alpha-D-muramate + L-alanine + ATP = UDP-N-acetyl-alpha-D-muramoyl-L-alanine + ADP + phosphate + H(+). It participates in cell wall biogenesis; peptidoglycan biosynthesis. Cell wall formation. This Dictyoglomus turgidum (strain DSM 6724 / Z-1310) protein is UDP-N-acetylmuramate--L-alanine ligase.